The sequence spans 384 residues: Cyclin-J (384 aa).

A Cyclin N-terminal domain is found at 15 to 143 (DIHQTLRYKE…LLETFEWNLC (129 aa)).

It belongs to the cyclin family. Cyclin J subfamily.

In Xenopus laevis (African clawed frog), this protein is Cyclin-J (ccnj).